Reading from the N-terminus, the 346-residue chain is uncharacterized protein (346 aa).

Residues 10-109 (WDFIMTDPSS…SNSNGNNSPV (100 aa)) form a disordered region. Positions 26–44 (KGSSKNGSPKTSSPKSGSP) are enriched in low complexity. Residues 56–67 (NQQLLQNDSINL) show a composition bias toward polar residues. The segment covering 94 to 109 (KSSVVPSNSNGNNSPV) has biased composition (low complexity).

This is an uncharacterized protein from Dictyostelium discoideum (Social amoeba).